The sequence spans 302 residues: Urease accessory protein UreD (302 aa).

Belongs to the UreD family. As to quaternary structure, ureD, UreF and UreG form a complex that acts as a GTP-hydrolysis-dependent molecular chaperone, activating the urease apoprotein by helping to assemble the nickel containing metallocenter of UreC. The UreE protein probably delivers the nickel.

The protein localises to the cytoplasm. In terms of biological role, required for maturation of urease via the functional incorporation of the urease nickel metallocenter. The sequence is that of Urease accessory protein UreD from Pseudoalteromonas translucida (strain TAC 125).